Consider the following 149-residue polypeptide: UPF0178 protein SERP0336 (149 aa).

It belongs to the UPF0178 family.

This Staphylococcus epidermidis (strain ATCC 35984 / DSM 28319 / BCRC 17069 / CCUG 31568 / BM 3577 / RP62A) protein is UPF0178 protein SERP0336.